The sequence spans 121 residues: MKSALHESRADTAEGTSSASSAWKSVRALPARTLIFFIELYRTYVSPLRMPTCRFMPTCSEYAVESLRTHGTIKGLLLTVVRLAKCAPWHPGGWDPVPARHDRHAGSRRCCPANVDEQRST.

Belongs to the UPF0161 family.

Its subcellular location is the cell membrane. Its function is as follows. Could be involved in insertion of integral membrane proteins into the membrane. In Rhodococcus opacus (strain B4), this protein is Putative membrane protein insertion efficiency factor.